A 30-amino-acid chain; its full sequence is ATP-dependent Clp protease ATP-binding subunit ClpA homolog (30 aa).

This sequence belongs to the ClpA/ClpB family.

The protein localises to the plastid. It localises to the chloroplast. May interact with a ClpP-like protease involved in degradation of denatured proteins in the chloroplast. In Pinus pinaster (Maritime pine), this protein is ATP-dependent Clp protease ATP-binding subunit ClpA homolog.